The sequence spans 84 residues: MQKLNKSSSKGKNNIETEEAEDSAGRGSTYGFGPYGGGGFSSKSSGEEATTGDTKKLKGEVEEGTGKLLHSKKLVDKGERKESE.

Residues 1 to 14 are compositionally biased toward low complexity; the sequence is MQKLNKSSSKGKNN. Positions 1 to 84 are disordered; the sequence is MQKLNKSSSK…VDKGERKESE (84 aa). Gly residues predominate over residues 28-40; sequence STYGFGPYGGGGF. Basic and acidic residues-rich tracts occupy residues 53-65 and 73-84; these read DTKK…EEGT and KLVDKGERKESE.

This is an uncharacterized protein from Schizosaccharomyces pombe (strain 972 / ATCC 24843) (Fission yeast).